The following is a 205-amino-acid chain: Protein N-terminal glutamine amidohydrolase (205 aa).

Catalysis depends on residues C20, H74, and D90.

The protein belongs to the NTAQ1 family. In terms of assembly, monomer.

It carries out the reaction N-terminal L-glutaminyl-[protein] + H2O = N-terminal L-glutamyl-[protein] + NH4(+). In terms of biological role, mediates the side-chain deamidation of N-terminal glutamine residues to glutamate, an important step in N-end rule pathway of protein degradation. Conversion of the resulting N-terminal glutamine to glutamate renders the protein susceptible to arginylation, polyubiquitination and degradation as specified by the N-end rule. Does not act on substrates with internal or C-terminal glutamine and does not act on non-glutamine residues in any position. The sequence is that of Protein N-terminal glutamine amidohydrolase (tun) from Drosophila pseudoobscura pseudoobscura (Fruit fly).